A 526-amino-acid polypeptide reads, in one-letter code: pH-sensitive chloride channel 2 (526 aa).

Residues 1–18 (MDTLGIFVLISYLGLSSA) form the signal peptide. The Extracellular segment spans residues 19 to 300 (AGVHLGDLQQ…VLLTREVGYY (282 aa)). Residues Asn33, Asn42, Asn52, Asn192, Asn231, Asn264, Asn271, and Asn283 are each glycosylated (N-linked (GlcNAc...) asparagine). The helical transmembrane segment at 301–321 (VIDYFLPSIMIVTISWVSFWL) threads the bilayer. At 322–327 (QADQTP) the chain is on the cytoplasmic side. Residues 328–347 (ARTTLGCTTLLSFITLSLSQ) traverse the membrane as a helical segment. Residues 348 to 360 (ENNLMKVSYVTMS) are Extracellular-facing. Residues 361–381 (EVWFLVCTIFIFGSLVEFAFV) form a helical membrane-spanning segment. Topologically, residues 382–505 (NTIWRRNNDL…VSLWIDRKMR (124 aa)) are cytoplasmic. Positions 463–488 (ISLDEQDETSTSESSDSSKEKPAQTF) are disordered. The helical transmembrane segment at 506–526 (FVFPLSFIVFNALFWTLVYCL) threads the bilayer.

It belongs to the ligand-gated ion channel (TC 1.A.9) family. In terms of tissue distribution, in third-instar larvae, expressed in the principal cells of the excretory Malpighian tubules (at protein level). Also detected in the enterocytes of the copper cell region and the iron cell region of the larval midgut (at protein level). In the copper cell region expression is confined to the interstitial cells and in the iron cell region it is expressed in the anterior portion (at protein level). Expressed in the Malpighian tubules and the middle midgut of third instar larvae and adults.

The protein localises to the apical cell membrane. It is found in the cell projection. The protein resides in the microvillus membrane. It localises to the late endosome membrane. Its subcellular location is the lysosome membrane. It carries out the reaction chloride(in) = chloride(out). Functionally, ligand and pH-gated channel that mediates chloride transport primarily in the mid-gut and thereby functions in larval metabolism and fluid homeostasis. Channel opening is triggered by zinc binding or, to a lesser extent, an increase in extracellular pH. Zinc-dependent activity in the mid-gut is required for modulating Tor-dependent metabolic programs that promote larval feeding and systematic growth. It may therefore act as an intestinal zinc sensor that mediates larval growth and metabolism in response to micronutrient availability. Activates Tor signaling via its activity in maintaining lysosome homeostasis in interstitial cells and/or by its role in activating the release of insulin-like peptides in the brain after feeding, via an unknown mechanism. Functions in lysosome homeostasis by regulating chloride transport into enterocyte lysosomes to sustain V-ATPase function which maintains lysosomal acidification and consequently promotes Tor activation at the lysosome membrane. Also appears to play a role in regulating fluid secretion and osmotic homeostasis in Malpighian tubules in response to the pH of extracellular urine. This function is important for proper urine production during diuresis. This Drosophila melanogaster (Fruit fly) protein is pH-sensitive chloride channel 2.